The primary structure comprises 218 residues: Glycerol-3-phosphate acyltransferase (218 aa).

A run of 6 helical transmembrane segments spans residues Phe-3–Ala-23, Gly-53–Ile-73, Phe-82–Phe-102, Leu-112–Val-132, Ile-142–Leu-162, and Glu-166–His-186.

It belongs to the PlsY family. In terms of assembly, probably interacts with PlsX.

The protein resides in the cell inner membrane. The catalysed reaction is an acyl phosphate + sn-glycerol 3-phosphate = a 1-acyl-sn-glycero-3-phosphate + phosphate. The protein operates within lipid metabolism; phospholipid metabolism. In terms of biological role, catalyzes the transfer of an acyl group from acyl-phosphate (acyl-PO(4)) to glycerol-3-phosphate (G3P) to form lysophosphatidic acid (LPA). This enzyme utilizes acyl-phosphate as fatty acyl donor, but not acyl-CoA or acyl-ACP. This Leptospira borgpetersenii serovar Hardjo-bovis (strain JB197) protein is Glycerol-3-phosphate acyltransferase.